The primary structure comprises 3498 residues: Mediator of RNA polymerase II transcription subunit 12 (3498 aa).

6 disordered regions span residues 365 to 456, 497 to 764, 2209 to 2576, 2589 to 2620, 2637 to 2889, and 2917 to 3498; these read IKQH…HTDI, GGVG…EPEK, AKKR…AYMK, ENNR…EAYA, LRKE…KEKQ, and NVAG…PNQY. Residues 368–394 show a composition bias toward basic residues; the sequence is HEKRKAGSLKKSERRRRRGLSKNRPKK. Residues 404 to 416 are compositionally biased toward basic and acidic residues; sequence SLDHDKVQIKQEP. 2 stretches are compositionally biased toward polar residues: residues 424–440 and 512–536; these read GQQS…SHQY and SNPT…SASP. A coiled-coil region spans residues 539 to 570; sequence SVDKENECEKKEDESKTKEKNKDKEKDKEKEK. 2 stretches are compositionally biased toward basic and acidic residues: residues 540 to 578 and 593 to 614; these read VDKE…HTND and ANDK…TGKE. The segment covering 621-630 has biased composition (low complexity); the sequence is SKTAKTSTSA. 3 stretches are compositionally biased toward basic and acidic residues: residues 691-719, 738-764, and 2209-2285; these read EVDK…KKAD, ESEK…EPEK, and AKKR…KRAS. Positions 2142-3498 are required for nuclear localization; that stretch reads QTTRLDKVAK…YPNQQPPNQY (1357 aa). A coiled-coil region spans residues 2203 to 2290; it reads VIDEEEAKKR…EKRASDAAAA (88 aa). 2 stretches are compositionally biased toward low complexity: residues 2342–2360 and 2409–2431; these read RADT…APIA and LADA…SSMP. A coiled-coil region spans residues 2395-2420; it reads RNLLNRKKEEKRNSLADASAAAAAAN. Residues 2444–2456 show a composition bias toward polar residues; the sequence is QSAGATQQLQGMQ. Residues 2459 to 2479 show a composition bias toward low complexity; sequence QMGGSMSGMNQNMGGMNQSMS. The segment covering 2514-2530 has biased composition (polar residues); the sequence is NRSSGPVSSETRQQIME. Composition is skewed to basic and acidic residues over residues 2547–2576, 2589–2616, and 2637–2724; these read QKQR…AYMK, ENNR…RAAE, and LRKE…EQQR. Residues 2725–2770 are compositionally biased toward low complexity; the sequence is RSQQNPYMNQQGQYSQQPPPSYQQSSYPNNYQPGQQGNQPPNYQQP. The span at 2771–2783 shows a compositional bias: polar residues; that stretch reads SHQSMQQGHQAGY. Positions 2784-2810 are enriched in low complexity; sequence QQTSNQMQMNMQQQQNRQQGGPQQSFS. Composition is skewed to polar residues over residues 2816–2827, 2842–2852, 2868–2881, and 2926–2956; these read NQPSQPGYSGYN, RNPFGNQQDMQ, HAQQ…QLSL, and GQQQ…SSNP. Residues 2957 to 2993 show a composition bias toward low complexity; sequence QGGMQSYQQQQPVLGQPGPIQTGQSTQQQIPAQSQQQ. Residues 2994-3009 show a composition bias toward polar residues; it reads YNSGRPQMHTTPTKND. Over residues 3039 to 3100 the composition is skewed to low complexity; sequence GQNVPGGYQQ…NVSQSQSAAQ (62 aa). The span at 3103-3127 shows a compositional bias: polar residues; the sequence is RPSQDSAYQQSGYNQTGNQSYQRPD. Low complexity-rich tracts occupy residues 3128-3184 and 3192-3223; these read QQQQ…SAQY and QGYD…QTQQ. The segment covering 3231 to 3253 has biased composition (polar residues); the sequence is SGYTANSGGSSNILNQSMEESGL. The span at 3254–3311 shows a compositional bias: low complexity; the sequence is NQGFSGASSNASSQQGGSSQMQQSGYGMPGNQMQMQQNQKQQVQRGMPTGMGQTNMGQ. The segment covering 3312–3321 has biased composition (gly residues); it reads SGMGQSGMGQ. Composition is skewed to low complexity over residues 3336 to 3356 and 3370 to 3408; these read QGQQ…NQRG and QQQH…QGQQ. Polar residues predominate over residues 3414-3425; it reads PSQQQSGAAYSN. The segment covering 3426 to 3436 has biased composition (low complexity); it reads QMQFQGVRQGQ. A compositionally biased stretch (gly residues) spans 3437 to 3446; sequence QGMGGMGGSG. The span at 3447–3498 shows a compositional bias: low complexity; sequence QQQPQTQPHGSNQYYQQQQDQRMQQQPQQPGQQQQHGYGMGQYPNQQPPNQY.

This sequence belongs to the Mediator complex subunit 12 family. In terms of assembly, component of the Mediator complex. In terms of tissue distribution, ubiquitously expressed.

Its subcellular location is the nucleus. Component of the Mediator complex, a coactivator involved in regulated gene transcription of nearly all RNA polymerase II-dependent genes. Mediator functions as a bridge to convey information from gene-specific regulatory proteins to the basal RNA polymerase II transcription machinery. Mediator is recruited to promoters by direct interactions with regulatory proteins and serves as a scaffold for the assembly of a functional preinitiation complex with RNA polymerase II and the general transcription factors. Functions downstream of let-60 during vulval induction. Required for asymmetric division of T-cells and for hypodermal development. The chain is Mediator of RNA polymerase II transcription subunit 12 (dpy-22) from Caenorhabditis elegans.